The sequence spans 490 residues: Betaine aldehyde dehydrogenase (490 aa).

Asn93 provides a ligand contact to K(+). 150–152 (GAW) provides a ligand contact to NAD(+). Catalysis depends on Lys162, which acts as the Charge relay system. 176–179 (KPSE) contributes to the NAD(+) binding site. K(+) is bound at residue Val180. Residue 230–233 (GTAT) participates in NAD(+) binding. Leu246 lines the K(+) pocket. Glu252 functions as the Proton acceptor in the catalytic mechanism. 3 residues coordinate NAD(+): Gly254, Cys286, and Glu387. Cys286 (nucleophile) is an active-site residue. Cys286 bears the Cysteine sulfenic acid (-SOH) mark. Residues Lys457 and Gly460 each coordinate K(+). The active-site Charge relay system is the Glu464.

The protein belongs to the aldehyde dehydrogenase family. In terms of assembly, dimer of dimers. K(+) is required as a cofactor.

It catalyses the reaction betaine aldehyde + NAD(+) + H2O = glycine betaine + NADH + 2 H(+). It functions in the pathway amine and polyamine biosynthesis; betaine biosynthesis via choline pathway; betaine from betaine aldehyde: step 1/1. In terms of biological role, involved in the biosynthesis of the osmoprotectant glycine betaine. Catalyzes the irreversible oxidation of betaine aldehyde to the corresponding acid. This is Betaine aldehyde dehydrogenase from Xanthomonas campestris pv. campestris (strain ATCC 33913 / DSM 3586 / NCPPB 528 / LMG 568 / P 25).